A 455-amino-acid chain; its full sequence is Bleomycin hydrolase (455 aa).

An N-acetylmethionine modification is found at methionine 1. Active-site residues include cysteine 73 and histidine 372. Lysine 391 is subject to N6-acetyllysine. Asparagine 396 is a catalytic residue.

It belongs to the peptidase C1 family. Homohexamer. Interacts with NUDT12 (via ANK repeats).

The protein localises to the cytoplasm. The protein resides in the cytoplasmic granule. It catalyses the reaction Inactivates bleomycin B2 (a cytotoxic glycometallopeptide) by hydrolysis of a carboxyamide bond of beta-aminoalanine, but also shows general aminopeptidase activity. The specificity varies somewhat with source, but amino acid arylamides of Met, Leu and Ala are preferred.. In terms of biological role, the normal physiological role of BLM hydrolase is unknown, but it catalyzes the inactivation of the antitumor drug BLM (a glycopeptide) by hydrolyzing the carboxamide bond of its B-aminoalaninamide moiety thus protecting normal and malignant cells from BLM toxicity. In Mus musculus (Mouse), this protein is Bleomycin hydrolase (Blmh).